The following is a 434-amino-acid chain: Glutamyl-tRNA reductase (434 aa).

Substrate contacts are provided by residues 49–52 (TCNR), Ser114, 119–121 (EPQ), and Gln125. Cys50 acts as the Nucleophile in catalysis. 199–204 (GAGETI) is an NADP(+) binding site.

Belongs to the glutamyl-tRNA reductase family. Homodimer.

The catalysed reaction is (S)-4-amino-5-oxopentanoate + tRNA(Glu) + NADP(+) = L-glutamyl-tRNA(Glu) + NADPH + H(+). The protein operates within porphyrin-containing compound metabolism; protoporphyrin-IX biosynthesis; 5-aminolevulinate from L-glutamyl-tRNA(Glu): step 1/2. In terms of biological role, catalyzes the NADPH-dependent reduction of glutamyl-tRNA(Glu) to glutamate 1-semialdehyde (GSA). The polypeptide is Glutamyl-tRNA reductase (Pasteurella multocida (strain Pm70)).